A 597-amino-acid chain; its full sequence is Integrator complex subunit 11 (597 aa).

Positions 68, 70, 72, 73, 157, and 178 each coordinate Zn(2+). Residues 68–73 carry the HXHXDH motif motif; sequence HFHLDH. Residue Glu203 is part of the active site. His414 is a Zn(2+) binding site. 1D-myo-inositol hexakisphosphate is bound at residue Lys462.

The protein belongs to the metallo-beta-lactamase superfamily. RNA-metabolizing metallo-beta-lactamase-like family. INTS11 subfamily. In terms of assembly, belongs to the multiprotein complex Integrator, at least composed of IntS1, IntS2, IntS3, IntS4, omd/IntS5, IntS6, defl/IntS7, IntS8, IntS9, IntS10, IntS11, IntS12, asun/IntS13, IntS14 and IntS15. The core complex associates with protein phosphatase 2A subunits mts/PP2A and Pp2A-29B, to form the Integrator-PP2A (INTAC) complex. IntS11 is part of the RNA endonuclease subcomplex, composed of IntS4, IntS9, IntS11 and inositol hexakisphosphate (InsP6). Interacts with Brat1; interaction is required for the assembly of the RNA endonuclease subcomplex and inhibits the endonuclease activity of IntS11 before formation of mature integrator complex. Zn(2+) is required as a cofactor. Expressed in neurons and glia of the larval and adult brain.

The protein resides in the nucleus. It localises to the cytoplasm. It is found in the cytosol. Its activity is regulated as follows. The RNA endonuclease activity is inhibited by Brat1 that forms hyrogen bond and hydrophobic interactions with the active site. Functionally, RNA endonuclease component of the integrator complex, a multiprotein complex that terminates RNA polymerase II (Pol II) transcription in the promoter-proximal region of genes. The integrator complex provides a quality checkpoint during transcription elongation by driving premature transcription termination of transcripts that are unfavorably configured for transcriptional elongation: the complex terminates transcription by (1) catalyzing dephosphorylation of the C-terminal domain (CTD) of Pol II subunit Polr2A/Rbp1 and Spt5, and (2) degrading the exiting nascent RNA transcript via endonuclease activity. The integrator complex is also involved in the 3'-end processing of the U7 snRNA, and also the spliceosomal snRNAs U1, U2, U4 and U5. Within the integrator complex, IntS11 constitutes the RNA endonuclease subunit that degrades exiting nascent RNA transcripts. The sequence is that of Integrator complex subunit 11 from Drosophila melanogaster (Fruit fly).